The chain runs to 269 residues: Undecaprenyl-diphosphatase (269 aa).

Helical transmembrane passes span 42 to 62, 83 to 103, 110 to 130, 142 to 162, 186 to 206, 219 to 239, and 247 to 267; these read WDTFIVLIQLGAVLGVVALYF, LTVLIGCIPAFAAGLALHGVI, PYLPQVICVSLILGGVILLVV, GMALSLKTAALIGLFQCLSLL, AEFSFFMAIPIMVGAFALDLL, AIAIGFVVSFLSGLVVVKFLI, and FTPFAWWRIVVGVIGLGLIYI.

This sequence belongs to the UppP family.

It is found in the cell inner membrane. The catalysed reaction is di-trans,octa-cis-undecaprenyl diphosphate + H2O = di-trans,octa-cis-undecaprenyl phosphate + phosphate + H(+). In terms of biological role, catalyzes the dephosphorylation of undecaprenyl diphosphate (UPP). Confers resistance to bacitracin. This is Undecaprenyl-diphosphatase from Caulobacter sp. (strain K31).